The primary structure comprises 198 residues: Elongation factor Ts (198 aa).

The interval 81–84 is involved in Mg(2+) ion dislocation from EF-Tu; that stretch reads TDFV.

This sequence belongs to the EF-Ts family.

It localises to the cytoplasm. Functionally, associates with the EF-Tu.GDP complex and induces the exchange of GDP to GTP. It remains bound to the aminoacyl-tRNA.EF-Tu.GTP complex up to the GTP hydrolysis stage on the ribosome. In Leptospira biflexa serovar Patoc (strain Patoc 1 / Ames), this protein is Elongation factor Ts.